Here is a 65-residue protein sequence, read N- to C-terminus: Large ribosomal subunit protein bL35 (65 aa).

Positions 1–23 (MPKIKTNRGAAKRFKKTGTGKVK) are disordered. A compositionally biased stretch (basic residues) spans 10–23 (AAKRFKKTGTGKVK).

This sequence belongs to the bacterial ribosomal protein bL35 family.

The sequence is that of Large ribosomal subunit protein bL35 from Trichlorobacter lovleyi (strain ATCC BAA-1151 / DSM 17278 / SZ) (Geobacter lovleyi).